We begin with the raw amino-acid sequence, 569 residues long: Cationic amino acid transporter 9, chloroplastic (569 aa).

The N-terminal 41 residues, 1–41, are a transit peptide targeting the chloroplast; the sequence is MGGHEGFSNQRLSSATWFSHFRASALRSKSLPPPSSQTAVR. 14 helical membrane passes run 53–73, 81–101, 113–135, 155–175, 181–201, 215–235, 250–270, 284–304, 333–353, 406–428, 444–464, 467–487, 502–522, and 528–548; these read GLFDLILLGVGASIGAGVFVV, AGPGVTISFLLAGASCVLNAL, VVGGAYMYSYSAFNEITAFLVFV, YAVALLELFPALKGSIPLWMG, LGGLLSLNILAPILLALLTLV, VMTATKVVIVLVVICAGAFEI, AVLTGATVVFFSYVGFDAVAN, IGIMGSLLVCISLYIGVCLVL, ILISIGAVAGLTTTLLVGLYV, HILSVGTLTGYSVVAACVVALRL, WQEGVICLVIIACSGFGAGVF, FSASVIFILLSVGVAVVASAV, FSCPGVPIVPSVCIFFNIFLF, and EAWIRFVVVSVLATAVYALYG.

It belongs to the amino acid-polyamine-organocation (APC) superfamily. Cationic amino acid transporter (CAT) (TC 2.A.3.3) family. As to expression, expressed in roots, stems, flowers, and leaves.

It is found in the plastid. It localises to the chloroplast membrane. Its function is as follows. Permease involved in the transport of the cationic amino acids. The polypeptide is Cationic amino acid transporter 9, chloroplastic (CAT9) (Arabidopsis thaliana (Mouse-ear cress)).